A 486-amino-acid polypeptide reads, in one-letter code: MQLTQLLALALSLATSEAAYKGFNYGDKKPDGSSKYQADFASEFETAQNLVGAPGFTSARLYTMIQAGTANDPISAIPAAIAQNTSLLLGLWASGNNMNNELTALKAAISQYGEDLSKLVVGISVGSEDLYRNSVLGQKVNAGVGVDPHVLASYIEEVRSTISGTPLSGAPLGHVDTWNDWVNGSNAAVIDAVDWVGFDGYPYFQNTMANSIDDAKALFNEAVAKTKSAAGNKEVWITETGWPVSGKTENLAVASIPNAKRFWDEVGCPLFDNTNTWWYTLQDAFGASVPNPSFGIVGSTLTTQPLFDLSCSKSNTTSSSAIASPTSTAAAAGGVAGGSTGSASGSSTGTGSSSGSGSNSNTGAASGAVGAADRETSGTSGSANTNGTSGSGSGSNSTSGHGSNVTVPTRPTSVSNVSPSKSSSALFTGAATSMGASPSSVGNVGPSKSSGAASPSSTTMFTGAATSVSAPVVHVVLLALMMVIAA.

The first 18 residues, 1–18, serve as a signal peptide directing secretion; that stretch reads MQLTQLLALALSLATSEA. N84 carries N-linked (GlcNAc...) asparagine glycosylation. E128 (proton donor) is an active-site residue. The N-linked (GlcNAc...) asparagine glycan is linked to N183. E239 (nucleophile) is an active-site residue. N-linked (GlcNAc...) asparagine glycosylation is found at N315, N386, N396, and N404. A disordered region spans residues 330-458; that stretch reads AAAGGVAGGS…SSGAASPSST (129 aa). Composition is skewed to low complexity over residues 341-404 and 413-424; these read GSAS…HGSN and SVSNVSPSKSSS. The segment covering 430–442 has biased composition (polar residues); that stretch reads AATSMGASPSSVG. Positions 445–458 are enriched in low complexity; the sequence is GPSKSSGAASPSST. G463 carries the GPI-anchor amidated glycine lipid modification. The propeptide at 464–486 is removed in mature form; the sequence is AATSVSAPVVHVVLLALMMVIAA.

Belongs to the glycosyl hydrolase 17 family. Post-translationally, the GPI-anchor is attached to the protein in the endoplasmic reticulum and serves to target the protein to the cell surface. There, the glucosamine-inositol phospholipid moiety is cleaved off and the GPI-modified mannoprotein is covalently attached via its lipidless GPI glycan remnant to the 1,6-beta-glucan of the outer cell wall layer.

The protein localises to the cell membrane. Its subcellular location is the secreted. The protein resides in the cell wall. It catalyses the reaction Hydrolysis of (1-&gt;3)-beta-D-glucosidic linkages in (1-&gt;3)-beta-D-glucans.. Glucanases play a role in cell expansion during growth, in cell-cell fusion during mating, and in spore release during sporulation. This enzyme may be involved in beta-glucan degradation and also function biosynthetically as a transglycosylase. The sequence is that of Probable glucan endo-1,3-beta-glucosidase eglC (eglC) from Aspergillus terreus (strain NIH 2624 / FGSC A1156).